A 408-amino-acid polypeptide reads, in one-letter code: Succinylornithine transaminase (408 aa).

Residue lysine 252 is modified to N6-(pyridoxal phosphate)lysine.

Belongs to the class-III pyridoxal-phosphate-dependent aminotransferase family. AstC subfamily. The cofactor is pyridoxal 5'-phosphate.

It catalyses the reaction N(2)-succinyl-L-ornithine + 2-oxoglutarate = N-succinyl-L-glutamate 5-semialdehyde + L-glutamate. It functions in the pathway amino-acid degradation; L-arginine degradation via AST pathway; L-glutamate and succinate from L-arginine: step 3/5. In terms of biological role, catalyzes the transamination of N(2)-succinylornithine and alpha-ketoglutarate into N(2)-succinylglutamate semialdehyde and glutamate. Can also act as an acetylornithine aminotransferase. The polypeptide is Succinylornithine transaminase (Salmonella typhi).